Reading from the N-terminus, the 93-residue chain is Small ribosomal subunit protein bS6 (93 aa).

The protein belongs to the bacterial ribosomal protein bS6 family.

Its function is as follows. Binds together with bS18 to 16S ribosomal RNA. This Treponema denticola (strain ATCC 35405 / DSM 14222 / CIP 103919 / JCM 8153 / KCTC 15104) protein is Small ribosomal subunit protein bS6.